A 642-amino-acid chain; its full sequence is Threonine--tRNA ligase (642 aa).

The 61-residue stretch at 1–61 (MPVITLPDGS…ETDVDLAIIT (61 aa)) folds into the TGS domain. Residues 243–534 (DHRKIGKQLD…LIEEYAGKFP (292 aa)) form a catalytic region. Zn(2+)-binding residues include Cys334, His385, and His511.

It belongs to the class-II aminoacyl-tRNA synthetase family. In terms of assembly, homodimer. It depends on Zn(2+) as a cofactor.

The protein resides in the cytoplasm. It carries out the reaction tRNA(Thr) + L-threonine + ATP = L-threonyl-tRNA(Thr) + AMP + diphosphate + H(+). Functionally, catalyzes the attachment of threonine to tRNA(Thr) in a two-step reaction: L-threonine is first activated by ATP to form Thr-AMP and then transferred to the acceptor end of tRNA(Thr). Also edits incorrectly charged L-seryl-tRNA(Thr). The polypeptide is Threonine--tRNA ligase (Shewanella loihica (strain ATCC BAA-1088 / PV-4)).